A 103-amino-acid polypeptide reads, in one-letter code: MDPQQKGLVNTCFVTTRIPSWAGARQNVTGSDLEGKPVPSDVLESGRPLAAPRIRTLYEEQQLNMLAVNVLLDELKIQVAAMQNSVTAIQREVNDLKQRIARD.

Positions Leu72–Arg99 form a coiled coil.

Belongs to the adenoviridae hexon-interlacing protein family. Homotrimer. Interacts with hexon protein; this interaction tethers the hexons together. Self-interacts with adjacent proteins. Interacts with kinesin light chain KLC1; this interaction leads to capsid disruption at the nuclear pore complex during virus entry into host cell.

Its subcellular location is the virion. The protein localises to the host nucleus. Structural component of the virion that acts as a cement protein on the capsid exterior and forms triskelion structures consisting of three molecules that stabilize three hexon trimers at the center of each icosahedral facet and fixes the peripentonal hexons. Dispensable for assembly. During virus entry, recruits the anterograde motor kinesin-1 to the capsid docked at the nuclear pore complex thereby subjecting the docked capsid to a pulling force. The resulting tension leads to capsid disruption, dispersion of capsid fragments toward cell periphery and eventually viral DNA entry into the host nucleus. The sequence is that of Hexon-interlacing protein from Canis lupus familiaris (Dog).